The following is a 216-amino-acid chain: ATP synthase subunit 5, mitochondrial (216 aa).

The protein belongs to the ATPase delta chain family. F-type ATPases have 2 components, CF(1) - the catalytic core - and CF(0) - the membrane proton channel. CF(1) has five subunits: alpha(3), beta(3), gamma(1), delta(1), epsilon(1). CF(0) has three main subunits: a, b and c.

The protein localises to the mitochondrion. The protein resides in the mitochondrion inner membrane. In terms of biological role, mitochondrial membrane ATP synthase (F(1)F(0) ATP synthase or Complex V) produces ATP from ADP in the presence of a proton gradient across the membrane which is generated by electron transport complexes of the respiratory chain. F-type ATPases consist of two structural domains, F(1) - containing the extramembraneous catalytic core and F(0) - containing the membrane proton channel, linked together by a central stalk and a peripheral stalk. During catalysis, ATP synthesis in the catalytic domain of F(1) is coupled via a rotary mechanism of the central stalk subunits to proton translocation. Part of the complex F(0) domain and the peripheric stalk, which acts as a stator to hold the catalytic alpha(3)beta(3) subcomplex and subunit a/ATP6 static relative to the rotary elements. The chain is ATP synthase subunit 5, mitochondrial (atp5) from Schizosaccharomyces pombe (strain 972 / ATCC 24843) (Fission yeast).